Reading from the N-terminus, the 419-residue chain is UDP-N-acetylglucosamine 1-carboxyvinyltransferase (419 aa).

22–23 lines the phosphoenolpyruvate pocket; the sequence is KN. Residue R91 participates in UDP-N-acetyl-alpha-D-glucosamine binding. Residue C115 is the Proton donor of the active site. The residue at position 115 (C115) is a 2-(S-cysteinyl)pyruvic acid O-phosphothioketal. Residues 120–124, 160–163, D305, and V327 each bind UDP-N-acetyl-alpha-D-glucosamine; these read RPVDL and KVSV.

The protein belongs to the EPSP synthase family. MurA subfamily.

It localises to the cytoplasm. It catalyses the reaction phosphoenolpyruvate + UDP-N-acetyl-alpha-D-glucosamine = UDP-N-acetyl-3-O-(1-carboxyvinyl)-alpha-D-glucosamine + phosphate. It participates in cell wall biogenesis; peptidoglycan biosynthesis. Cell wall formation. Adds enolpyruvyl to UDP-N-acetylglucosamine. This is UDP-N-acetylglucosamine 1-carboxyvinyltransferase from Salmonella dublin (strain CT_02021853).